The primary structure comprises 106 residues: MMATGTPESQARFGQSVKGLLTEKVTTCGTDVIALTKQVLKGSRSSELLGQAARNMVLQEDAILHSEDSLRKMAIITTHLQYQQEAIQKNVEQSSDLQDQLNHLLK.

It belongs to the BORCS7 family. As to quaternary structure, component of the BLOC-one-related complex (BORC) which is composed of BLOC1S1, BLOC1S2, BORCS5, BORCS6, BORCS7, BORCS8, KXD1 and SNAPIN.

It localises to the lysosome membrane. In terms of biological role, as part of the BORC complex may play a role in lysosomes movement and localization at the cell periphery. Associated with the cytosolic face of lysosomes, the BORC complex may recruit ARL8B and couple lysosomes to microtubule plus-end-directed kinesin motor. The chain is BLOC-1-related complex subunit 7 from Homo sapiens (Human).